A 327-amino-acid chain; its full sequence is L-lactate dehydrogenase (327 aa).

Residues valine 18, aspartate 39, arginine 44, tyrosine 69, and 83–84 (GL) each bind NAD(+). Substrate is bound by residues glutamine 86, arginine 92, and 124–127 (NPVD). NAD(+) contacts are provided by residues 122–124 (AAN) and serine 147. 152–155 (DSAR) serves as a coordination point for substrate. Positions 157 and 172 each coordinate beta-D-fructose 1,6-bisphosphate. Histidine 179 functions as the Proton acceptor in the catalytic mechanism. Position 224 is a phosphotyrosine (tyrosine 224). Threonine 233 lines the substrate pocket.

This sequence belongs to the LDH/MDH superfamily. LDH family. As to quaternary structure, homotetramer.

Its subcellular location is the cytoplasm. The enzyme catalyses (S)-lactate + NAD(+) = pyruvate + NADH + H(+). It participates in fermentation; pyruvate fermentation to lactate; (S)-lactate from pyruvate: step 1/1. Allosterically activated by fructose 1,6-bisphosphate (FBP). Functionally, catalyzes the conversion of lactate to pyruvate. The chain is L-lactate dehydrogenase from Streptococcus suis (strain 98HAH33).